Reading from the N-terminus, the 551-residue chain is Intestinal-type alkaline phosphatase 2 (551 aa).

The first 19 residues, 1-19 (MQGAWVLLLLGFRLQLSLS), serve as a signal peptide directing secretion. Asp61 contributes to the Mg(2+) binding site. 2 residues coordinate Zn(2+): Asp61 and Ser111. Ser111 functions as the Phosphoserine intermediate in the catalytic mechanism. The cysteines at positions 140 and 202 are disulfide-linked. N-linked (GlcNAc...) asparagine glycosylation occurs at Asn141. Mg(2+) is bound at residue Ser174. Glu235 serves as a coordination point for Ca(2+). Asn241 is a glycosylation site (N-linked (GlcNAc...) asparagine). Positions 288, 289, and 304 each coordinate Ca(2+). Glu330 contacts Mg(2+). Residues Asp335, His339, Asp376, and His377 each contribute to the Zn(2+) site. N-linked (GlcNAc...) asparagine glycosylation is present at Asn426. Cys485 and Cys492 are joined by a disulfide. A disordered region spans residues 496–537 (PPADENRPTTPVQNSTTTTTTTTTTTTTTTTTRVQNSASSLG). N-linked (GlcNAc...) asparagine glycosylation occurs at Asn509. A compositionally biased stretch (low complexity) spans 511-527 (TTTTTTTTTTTTTTTTT). Residues 528 to 537 (RVQNSASSLG) show a composition bias toward polar residues. Residue Asn531 is the site of GPI-anchor amidated asparagine attachment. Residues 532 to 551 (SASSLGPATAPLAWHYWPRR) constitute a propeptide, removed in mature form.

It belongs to the alkaline phosphatase family. As to quaternary structure, homodimer. The cofactor is Mg(2+). Requires Zn(2+) as cofactor. Ca(2+) is required as a cofactor.

Its subcellular location is the cell membrane. The enzyme catalyses a phosphate monoester + H2O = an alcohol + phosphate. Functionally, alkaline phosphatase that can hydrolyze various phosphate compounds. The protein is Intestinal-type alkaline phosphatase 2 of Rattus norvegicus (Rat).